Consider the following 431-residue polypeptide: Probable ganciclovir kinase (431 aa).

One can recognise a Protein kinase domain in the interval 79-368 (PQEDAVLGSG…KLSIGIDSFG (290 aa)). ATP contacts are provided by residues 85–93 (LGSGSFGSV) and Lys103. Asp195 functions as the Proton acceptor in the catalytic mechanism.

This sequence belongs to the protein kinase superfamily. Tyr protein kinase family. HCMV ganciclovir subfamily.

Phosphorylates the antiviral nucleoside analog ganciclovir. This is Probable ganciclovir kinase (36) from Saimiriine herpesvirus 2 (strain 11) (SaHV-2).